A 316-amino-acid chain; its full sequence is Olfactory receptor 5P79 (316 aa).

Topologically, residues 1–28 are extracellular; that stretch reads MGILKDGNHTAVTEFILLGLTDDPVLKV. N-linked (GlcNAc...) asparagine glycosylation is present at N8. A helical membrane pass occupies residues 29–49; the sequence is VLFTIILCIYLVTVSGNLSTI. Residues 50-57 lie on the Cytoplasmic side of the membrane; sequence LLIRVSSQ. The chain crosses the membrane as a helical span at residues 58-78; it reads LHHPMYFFLSHLASVDIGISS. Residues 79-102 are Extracellular-facing; the sequence is SVTPNMLVNFLLERSTISYLGCGI. C100 and C192 are oxidised to a cystine. Residues 103–123 traverse the membrane as a helical segment; that stretch reads QLGSGAFFGSTESFLLAAMAY. Over 124 to 136 the chain is Cytoplasmic; it reads DHFMAICNPLLYS. Residues 137–157 traverse the membrane as a helical segment; that stretch reads TKMSTQVCIQLLVGSYIGGFL. The Extracellular segment spans residues 158–199; that stretch reads NASSFILSFFSFLFCGPNKVNHFFCDFTPLVELSCSDNSVLL. The chain crosses the membrane as a helical span at residues 200 to 220; sequence ILDSFSAGSIIVITVLVIAIS. Residues 221–240 are Cytoplasmic-facing; it reads YTYILITILKMHSTEGRHKA. Residues 241-261 traverse the membrane as a helical segment; sequence FSTCTSHLTAVTVFYGTVTFI. At 262-274 the chain is on the extracellular side; sequence YVMPKSSYSTDQN. Residues 275 to 297 form a helical membrane-spanning segment; sequence KVLSVFYMIAIAIPMLNPLIYSL. Over 298-316 the chain is Cytoplasmic; that stretch reads RNNEIKNALKRQLSKKTFS.

The protein belongs to the G-protein coupled receptor 1 family.

It is found in the cell membrane. In terms of biological role, potential odorant receptor. In Mus musculus (Mouse), this protein is Olfactory receptor 5P79.